Reading from the N-terminus, the 181-residue chain is Minor capsid protein P4 (181 aa).

As to quaternary structure, interacts with the major capsid protein.

Its subcellular location is the virion. Its function is as follows. One of the minor capsid proteins that constitute a network internal to the major capsid proteins and outside the lipid membrane. The minor capsid proteins glue and stabilize the capsomers. The chain is Minor capsid protein P4 from Chlorella (PBCV-1).